The sequence spans 583 residues: Aspartate--tRNA ligase (583 aa).

Residue glutamate 173 participates in L-aspartate binding. The interval 197–200 is aspartate; that stretch reads QLFK. Position 219 (arginine 219) interacts with L-aspartate. ATP contacts are provided by residues 219–221 and glutamine 228; that span reads RDE. Residue histidine 444 coordinates L-aspartate. An ATP-binding site is contributed by glutamate 478. Arginine 485 provides a ligand contact to L-aspartate. Residue 530–533 coordinates ATP; it reads GLDR.

Belongs to the class-II aminoacyl-tRNA synthetase family. Type 1 subfamily. As to quaternary structure, homodimer.

It is found in the cytoplasm. It carries out the reaction tRNA(Asp) + L-aspartate + ATP = L-aspartyl-tRNA(Asp) + AMP + diphosphate. Its function is as follows. Catalyzes the attachment of L-aspartate to tRNA(Asp) in a two-step reaction: L-aspartate is first activated by ATP to form Asp-AMP and then transferred to the acceptor end of tRNA(Asp). The protein is Aspartate--tRNA ligase of Azobacteroides pseudotrichonymphae genomovar. CFP2.